The following is a 210-amino-acid chain: uncharacterized protein (210 aa).

Positions 1 to 17 are cleaved as a signal peptide; sequence MKRTAVSLCLLTGLLSG. Cysteine 18 carries N-palmitoyl cysteine lipidation. The S-diacylglycerol cysteine moiety is linked to residue cysteine 18. The span at 176 to 195 shows a compositional bias: polar residues; the sequence is EMKTSPQGSPVSENENANGE. Residues 176–210 form a disordered region; that stretch reads EMKTSPQGSPVSENENANGETRQDMKIDRNDKNAR. Residues 196 to 210 are compositionally biased toward basic and acidic residues; sequence TRQDMKIDRNDKNAR.

Its subcellular location is the cell membrane. This is an uncharacterized protein from Bacillus subtilis (strain 168).